Here is a 1399-residue protein sequence, read N- to C-terminus: DNA-directed RNA polymerase subunit beta' (1399 aa).

Cysteine 70, cysteine 72, cysteine 85, and cysteine 88 together coordinate Zn(2+). Mg(2+) is bound by residues aspartate 460, aspartate 462, and aspartate 464. The Zn(2+) site is built by cysteine 814, cysteine 888, cysteine 895, and cysteine 898.

It belongs to the RNA polymerase beta' chain family. In terms of assembly, the RNAP catalytic core consists of 2 alpha, 1 beta, 1 beta' and 1 omega subunit. When a sigma factor is associated with the core the holoenzyme is formed, which can initiate transcription. Requires Mg(2+) as cofactor. Zn(2+) serves as cofactor.

It catalyses the reaction RNA(n) + a ribonucleoside 5'-triphosphate = RNA(n+1) + diphosphate. DNA-dependent RNA polymerase catalyzes the transcription of DNA into RNA using the four ribonucleoside triphosphates as substrates. This is DNA-directed RNA polymerase subunit beta' from Pseudomonas fluorescens (strain SBW25).